The chain runs to 764 residues: Aconitate hydratase (764 aa).

75-77 (DSH) contributes to the substrate binding site. Residues C307, C372, and C375 each contribute to the [4Fe-4S] cluster site. Substrate-binding positions include R405, R410, R568, and 648 to 649 (SR).

This sequence belongs to the aconitase/IPM isomerase family. The cofactor is [4Fe-4S] cluster.

It is found in the cytoplasm. It catalyses the reaction citrate = D-threo-isocitrate. Its pathway is carbohydrate metabolism; glyoxylate and dicarboxylate metabolism. Its function is as follows. Catalyzes the isomerization of citrate to isocitrate via cis-aconitate. The protein is Aconitate hydratase (ACO) of Cucumis melo var. conomon (Oriental pickling melon).